The primary structure comprises 193 residues: Phosphoheptose isomerase (193 aa).

The 157-residue stretch at 37–193 folds into the SIS domain; it reads LAASFKADGK…QLIEKEMASV (157 aa). Residue 52-54 participates in substrate binding; it reads NGG. The Zn(2+) site is built by His-61 and Glu-65. Substrate contacts are provided by residues Glu-65, 93–94, 119–121, Ser-124, and Gln-172; these read ND and STS. Zn(2+) contacts are provided by Gln-172 and His-180.

The protein belongs to the SIS family. GmhA subfamily. In terms of assembly, homotetramer. Zn(2+) is required as a cofactor.

The protein localises to the cytoplasm. The enzyme catalyses 2 D-sedoheptulose 7-phosphate = D-glycero-alpha-D-manno-heptose 7-phosphate + D-glycero-beta-D-manno-heptose 7-phosphate. It participates in carbohydrate biosynthesis; D-glycero-D-manno-heptose 7-phosphate biosynthesis; D-glycero-alpha-D-manno-heptose 7-phosphate and D-glycero-beta-D-manno-heptose 7-phosphate from sedoheptulose 7-phosphate: step 1/1. Functionally, catalyzes the isomerization of sedoheptulose 7-phosphate in D-glycero-D-manno-heptose 7-phosphate. The protein is Phosphoheptose isomerase of Edwardsiella ictaluri (strain 93-146).